We begin with the raw amino-acid sequence, 158 residues long: Methylated-DNA--protein-cysteine methyltransferase (158 aa).

Cysteine 126 acts as the Nucleophile; methyl group acceptor in catalysis.

The protein belongs to the MGMT family.

It localises to the cytoplasm. The enzyme catalyses a 6-O-methyl-2'-deoxyguanosine in DNA + L-cysteinyl-[protein] = S-methyl-L-cysteinyl-[protein] + a 2'-deoxyguanosine in DNA. It carries out the reaction a 4-O-methyl-thymidine in DNA + L-cysteinyl-[protein] = a thymidine in DNA + S-methyl-L-cysteinyl-[protein]. Its function is as follows. Involved in the cellular defense against the biological effects of O6-methylguanine (O6-MeG) and O4-methylthymine (O4-MeT) in DNA. Repairs the methylated nucleobase in DNA by stoichiometrically transferring the methyl group to a cysteine residue in the enzyme. This is a suicide reaction: the enzyme is irreversibly inactivated. The protein is Methylated-DNA--protein-cysteine methyltransferase of Methanosarcina mazei (strain ATCC BAA-159 / DSM 3647 / Goe1 / Go1 / JCM 11833 / OCM 88) (Methanosarcina frisia).